The primary structure comprises 238 residues: Ribonuclease 3 (238 aa).

Positions 4–134 (PRQALLDAFG…LLGAIYLHHG (131 aa)) constitute an RNase III domain. E44 contributes to the Mg(2+) binding site. D48 is an active-site residue. Residues D120 and E123 each contribute to the Mg(2+) site. The active site involves E123. The 69-residue stretch at 161-229 (DWKTSLQELT…ASAAWKALDV (69 aa)) folds into the DRBM domain.

This sequence belongs to the ribonuclease III family. As to quaternary structure, homodimer. Mg(2+) serves as cofactor.

It is found in the cytoplasm. It carries out the reaction Endonucleolytic cleavage to 5'-phosphomonoester.. Functionally, digests double-stranded RNA. Involved in the processing of primary rRNA transcript to yield the immediate precursors to the large and small rRNAs (23S and 16S). Processes some mRNAs, and tRNAs when they are encoded in the rRNA operon. Processes pre-crRNA and tracrRNA of type II CRISPR loci if present in the organism. The polypeptide is Ribonuclease 3 (Mycobacterium leprae (strain TN)).